The following is a 185-amino-acid chain: Pyridoxal 5'-phosphate synthase subunit PdxT (185 aa).

46–48 lines the L-glutamine pocket; it reads GES. The active-site Nucleophile is the C75. L-glutamine contacts are provided by residues R101 and 129–130; that span reads IR. Active-site charge relay system residues include H165 and E167.

It belongs to the glutaminase PdxT/SNO family. As to quaternary structure, in the presence of PdxS, forms a dodecamer of heterodimers. Only shows activity in the heterodimer.

The enzyme catalyses aldehydo-D-ribose 5-phosphate + D-glyceraldehyde 3-phosphate + L-glutamine = pyridoxal 5'-phosphate + L-glutamate + phosphate + 3 H2O + H(+). It catalyses the reaction L-glutamine + H2O = L-glutamate + NH4(+). It functions in the pathway cofactor biosynthesis; pyridoxal 5'-phosphate biosynthesis. Functionally, catalyzes the hydrolysis of glutamine to glutamate and ammonia as part of the biosynthesis of pyridoxal 5'-phosphate. The resulting ammonia molecule is channeled to the active site of PdxS. In Staphylococcus epidermidis (strain ATCC 12228 / FDA PCI 1200), this protein is Pyridoxal 5'-phosphate synthase subunit PdxT.